The sequence spans 465 residues: E3 ubiquitin-protein ligase TRIM15 (465 aa).

The RING-type zinc finger occupies 16–61 (CTLCVGPLEDAVTAPCGHTFCRLCLPTLSQMGAQSSGKILLCPLCQ). The segment at 78-119 (LGETYCEEHGEKIYFFCENDAEFLCVFCREGPTHQAHTVGFL) adopts a B box-type zinc-finger fold. Cys83, His86, Cys105, and His111 together coordinate Zn(2+). Residues 126-229 (YRDRLRSRLE…VKELEEKCQQ (104 aa)) adopt a coiled-coil conformation. Positions 276 to 465 (EMMRMFSENL…KKGSCLTLKG (190 aa)) constitute a B30.2/SPRY domain.

The protein belongs to the TRIM/RBCC family. Interacts with paxillin/PXN; this interaction recruits TRIM15 to focal adhesions. Interacts with TRIM8; this interaction prevents TRIM8 cytoplasmic translocation.

It is found in the cytoplasm. Its subcellular location is the nucleus. The protein resides in the cell junction. The protein localises to the focal adhesion. It carries out the reaction S-ubiquitinyl-[E2 ubiquitin-conjugating enzyme]-L-cysteine + [acceptor protein]-L-lysine = [E2 ubiquitin-conjugating enzyme]-L-cysteine + N(6)-ubiquitinyl-[acceptor protein]-L-lysine.. Functionally, E3 ubiquitin ligase that plays a role in several processes including innate antiviral immnity, cell migration and chemotaxis. Acts as a 'Lys-63'-specific ubiquitin ligase for MAPK1/ERK2 and MAPK3/ERK1, promoting their activation by facilitating their interaction with MAP2K1 and MAP2K2. Also plays a role in cell migration and chemotaxis by acting as a stable focal adhesion component upon recruitment by multi-adapter protein paxillin/PXN. Functions in the RIGI-mediated interferon induction pathway upstream or at the level of MAVS. Inhibits NF-kappa-B activation by turnover of 'Lys-63'-linked ubiquitination of MAP3K7/TAK1. Mechanistically, prevents TRIM8 cytoplasmic translocation and thus inhibits TRIM8-mediated 'Lys-63'-linked polyubiquitination of MAP3K7/TAK1 in the cytoplasm. Also has an important regulatory effect on the activation of hepatic stellate cells (HSCs). In Macaca mulatta (Rhesus macaque), this protein is E3 ubiquitin-protein ligase TRIM15 (TRIM15).